The sequence spans 112 residues: Small ribosomal subunit protein bS6 (112 aa).

It belongs to the bacterial ribosomal protein bS6 family.

Its function is as follows. Binds together with bS18 to 16S ribosomal RNA. The polypeptide is Small ribosomal subunit protein bS6 (Christiangramia forsetii (strain DSM 17595 / CGMCC 1.15422 / KT0803) (Gramella forsetii)).